We begin with the raw amino-acid sequence, 71 residues long: Paralithocin 2 (71 aa).

An N-terminal signal peptide occupies residues 1–23 (MGAAKVLLVVLAVMVAVPNLAEG). 4 disulfide bridges follow: cysteine 29-cysteine 58, cysteine 34-cysteine 54, cysteine 39-cysteine 52, and cysteine 44-cysteine 55. Arginine 70 is subject to Arginine amide; partial.

It belongs to the paralithocin family. Post-translationally, the amidated form is probably the active form.

Its function is as follows. Has antibacterial activity, mainly against marine Gram-positive bacteria like C.maltaromaticum (MIC=50 uM), C.mobile (MIC=50 uM), C.divergens (MIC=50 uM) and C.funditum (MIC=25 uM) but also against C.glutamicum (MIC=12.5 uM). Has very little or no activity against Gram-negative bacteria. In Paralithodes camtschaticus (Red king crab), this protein is Paralithocin 2.